The primary structure comprises 274 residues: Nickel/cobalt efflux system RcnA (274 aa).

Over 1-12 the chain is Periplasmic; the sequence is MGEFPTLLQQGN. Residues 13–33 traverse the membrane as a helical segment; the sequence is GWFFIPSAILLGILHGLEPGH. Topologically, residues 34–51 are cytoplasmic; the sequence is SKTMMAAFIIAIKGTVKQ. A helical transmembrane segment spans residues 52–72; it reads AVMLGLAATLSHTAIVWLIAL. The Periplasmic portion of the chain corresponds to 73-85; that stretch reads GGMYLSRAFTAQS. The helical transmembrane segment at 86–106 threads the bilayer; sequence VEPWLQLISAIIILSTACWMF. Topologically, residues 107–174 are cytoplasmic; the sequence is WRTWRGEQQW…FDGQTVTNGQ (68 aa). Over residues 122–141 the composition is skewed to basic and acidic residues; that stretch reads HHDHDHDHDHDHDHHGHIHP. The tract at residues 122-143 is disordered; the sequence is HHDHDHDHDHDHDHHGHIHPEG. A helical membrane pass occupies residues 175–195; that stretch reads ILLFGLTGGLIPCPAAITVLL. Topologically, residues 196–209 are periplasmic; the sequence is ICIQLKAFTLGATM. Residues 210 to 230 traverse the membrane as a helical segment; that stretch reads VLSFSLSLALTLVTVGVGAAI. Over 231 to 251 the chain is Cytoplasmic; sequence SVQQAAKRWSGFSTLARRAPY. The helical transmembrane segment at 252–272 threads the bilayer; the sequence is FSSILIGLVGVYMGIHGYTGI. The Periplasmic portion of the chain corresponds to 273-274; the sequence is MQ.

It belongs to the NiCoT transporter (TC 2.A.52) family. RcnA subfamily.

Its subcellular location is the cell inner membrane. Efflux system for nickel and cobalt. This chain is Nickel/cobalt efflux system RcnA (rcnA), found in Salmonella paratyphi A (strain ATCC 9150 / SARB42).